Reading from the N-terminus, the 450-residue chain is Nuclear hormone receptor family member nhr-40 (450 aa).

Positions 28–103 (GTLCVVCSDF…MGMDPKAIQH (76 aa)) form a DNA-binding region, nuclear receptor. 2 NR C4-type zinc fingers span residues 31–51 (CVVCSDFASGIHYSVASCNGC) and 67–91 (CQFSGDCVVGKSVRCVCRSCRLKKC). Positions 173-450 (DVKAVIEDLL…LIDQLIIVGL (278 aa)) constitute an NR LBD domain.

The protein belongs to the nuclear hormone receptor family. In terms of tissue distribution, isoform b: Expressed in body wall muscle cells, pharyngeal muscles, rectal gland cells, vulval and uterine muscles and neurons in the head and ventral nerve cord. Isoform c: Expressed in body wall muscle cells, neurons in the head, nerve ring, ventral and dorsal nerve cords and epidermal cells in the tail.

The protein localises to the nucleus. Functionally, orphan nuclear receptor. Plays a role in morphogenesis and elongation during embryonic and larval development. Plays a role in muscle formation and motility. This is Nuclear hormone receptor family member nhr-40 from Caenorhabditis elegans.